Reading from the N-terminus, the 345-residue chain is Probable deoxyhypusine synthase 2 (345 aa).

Catalysis depends on Lys-292, which acts as the Nucleophile.

It belongs to the deoxyhypusine synthase family. Requires NAD(+) as cofactor.

It carries out the reaction [eIF5A protein]-L-lysine + spermidine = [eIF5A protein]-deoxyhypusine + propane-1,3-diamine. Its pathway is protein modification; eIF5A hypusination. Its function is as follows. Catalyzes the NAD-dependent oxidative cleavage of spermidine and the subsequent transfer of the butylamine moiety of spermidine to the epsilon-amino group of a specific lysine residue of the eIF-5A precursor protein to form the intermediate deoxyhypusine residue. This Methanosarcina acetivorans (strain ATCC 35395 / DSM 2834 / JCM 12185 / C2A) protein is Probable deoxyhypusine synthase 2 (dys2).